A 541-amino-acid chain; its full sequence is Cytochrome bc1 complex cytochrome b subunit (541 aa).

A helical transmembrane segment spans residues 36-56; that stretch reads FLLGEIALYSFIILILTGVYL. Heme contacts are provided by His105 and His119. Transmembrane regions (helical) follow at residues 109–129, 137–157, and 169–189; these read ALMFVVSMMVHMMRIFFTGAF, WVIGVVLLILGIAEGFMGYSL, and IMSAIIVGLPIIGTWMHWMIF. Residues His206 and His221 each coordinate heme. The next 5 helical transmembrane spans lie at 207–227, 256–276, 325–345, 371–391, and 408–428; these read VLIIPGIILGLIAAHLALVWY, SVAFGAITLGFLSLLAGVTTI, VFWVAIMLGILVVLLIAYPWI, LGVMALIFYILLTISGGNDIW, and IGLIVFPAIGYFVTYRLCIGL.

It belongs to the cytochrome b family. In terms of assembly, the cytochrome bc1 complex is composed of a cytochrome b (QcrB), the Rieske protein iron-sulfur (QcrA) and a diheme cytochrome c (QcrC) subunit. Heme serves as cofactor.

The protein resides in the cell membrane. The enzyme catalyses a quinol + 2 Fe(III)-[cytochrome c](out) = a quinone + 2 Fe(II)-[cytochrome c](out) + 2 H(+)(out). Functionally, cytochrome b subunit of the cytochrome bc1 complex, an essential component of the respiratory electron transport chain required for ATP synthesis. The bc1 complex catalyzes the oxidation of menaquinol and the reduction of cytochrome c in the respiratory chain. The bc1 complex operates through a Q-cycle mechanism that couples electron transfer to generation of the proton gradient that drives ATP synthesis. The polypeptide is Cytochrome bc1 complex cytochrome b subunit (qcrB) (Corynebacterium efficiens (strain DSM 44549 / YS-314 / AJ 12310 / JCM 11189 / NBRC 100395)).